Reading from the N-terminus, the 95-residue chain is Small ribosomal subunit protein uS19 (95 aa).

This sequence belongs to the universal ribosomal protein uS19 family.

Functionally, protein S19 forms a complex with S13 that binds strongly to the 16S ribosomal RNA. The protein is Small ribosomal subunit protein uS19 of Chloroflexus aurantiacus (strain ATCC 29366 / DSM 635 / J-10-fl).